The chain runs to 350 residues: RING finger protein 44 (350 aa).

The segment at Cys298–Arg339 adopts an RING-type; atypical zinc-finger fold.

The polypeptide is RING finger protein 44 (Rnf44) (Rattus norvegicus (Rat)).